The primary structure comprises 331 residues: N-arachidonyl glycine receptor (331 aa).

Topologically, residues 1–26 (MITLNNQDQPVPFNNSYPDEYEIAAL) are extracellular. Residue Asn14 is glycosylated (N-linked (GlcNAc...) asparagine). A helical transmembrane segment spans residues 27–47 (VFYSCIFIIGLFVNITALWVF). The Cytoplasmic segment spans residues 48–56 (SCTTKKRTT). The helical transmembrane segment at 57-77 (VTIYMMNVALVDLIFIMTLPF) threads the bilayer. Residues 78-95 (RMFYYAKDEWPFGEYFCQ) are Extracellular-facing. Cysteines 94 and 172 form a disulfide. A helical transmembrane segment spans residues 96-116 (ILGALTVFYPSIALWLLAFIS). Residues 117 to 138 (ADRYMAIVQPKYAKELKNTCKA) are Cytoplasmic-facing. A helical membrane pass occupies residues 139-159 (VLACVGVWIMTLTTTIPLLLL). Residues 160-191 (HKDPDKDSTPATCLKISDIVYLKAVNVLNFTR) are Extracellular-facing. The N-linked (GlcNAc...) asparagine glycan is linked to Asn188. A helical transmembrane segment spans residues 192-212 (LTFFFLIPLFIMIGCYLVIIH). At 213–232 (NLLHGRTSKLKPKVKEKSIR) the chain is on the cytoplasmic side. The helical transmembrane segment at 233 to 253 (IIITLLVQVLVCFMPFHICFA) threads the bilayer. Over 254–268 (FLMLGTGENSYSPWG) the chain is Extracellular. The helical transmembrane segment at 269–289 (AFTTFLMNLSTCLDVILYYIV) threads the bilayer. Residues 290–331 (SKQFQARVISVMLYRNYLRGMRRKSFRSGSLRSLSNINSEML) are Cytoplasmic-facing. Ser322 is subject to Phosphoserine.

The protein belongs to the G-protein coupled receptor 1 family.

The protein localises to the cell membrane. It is found in the cytoplasmic vesicle membrane. Its function is as follows. G protein-coupled receptor (GPCR) that plays a role in diverse physiological processes particularly within the immune and nervous systems. Becomes active when triggered by various endogenous ligands including endocannabinoid N-arachidonyl glycine (NAGly), delta-9-tetrahydrocannabinol or resolvin D2/RvD2 derived from the omega-3 fatty acid docosahexaenoic acid (DHA). Upon RvD2 binding, facilitates the resolution of inflammation, aiding in tissue repair and homeostasis. Mechanistically, RvD2 ligation initiates Galphas protein coupling, activation of cAMP-PKA signaling pathway and phosphorylation of STAT3, leading to RvD2-stimulated macrophage phagocytosis. Mediates NAGly-induced process of reorganization of actin filaments and induction of acrosomal exocytosis. Activation by N-arachidonoyl glycine (NAGly) can also induce apoptosis in macrophages. Plays a role in homeostasis of CD8+ subsets of intraepithelial lymphocytes (IELs) (CD8alphaalpha and CD8alphabeta IELs) in small intestine by supporting preferential migration of CD8alphaalpha T-cells to intraepithelial compartment over lamina propria compartment, and by mediating their reconstitution into small intestine after bone marrow transplant. Participates also in hypotensive responses, mediating reduction in intraocular and blood pressure. The sequence is that of N-arachidonyl glycine receptor from Macaca fascicularis (Crab-eating macaque).